Reading from the N-terminus, the 759-residue chain is 1,4-alpha-glucan branching enzyme GlgB (759 aa).

Residues 1–22 (MAKTKGLPKDTAVTPSPHLRPH) are disordered. The Nucleophile role is filled by D422. E475 serves as the catalytic Proton donor.

This sequence belongs to the glycosyl hydrolase 13 family. GlgB subfamily. Monomer.

It catalyses the reaction Transfers a segment of a (1-&gt;4)-alpha-D-glucan chain to a primary hydroxy group in a similar glucan chain.. Its pathway is glycan biosynthesis; glycogen biosynthesis. In terms of biological role, catalyzes the formation of the alpha-1,6-glucosidic linkages in glycogen by scission of a 1,4-alpha-linked oligosaccharide from growing alpha-1,4-glucan chains and the subsequent attachment of the oligosaccharide to the alpha-1,6 position. The chain is 1,4-alpha-glucan branching enzyme GlgB from Mycobacterium sp. (strain KMS).